A 389-amino-acid polypeptide reads, in one-letter code: Alcohol dehydrogenase-like 5 (389 aa).

8 residues coordinate Zn(2+): Cys-54, Thr-56, His-77, Cys-107, Cys-110, Cys-113, Cys-121, and Cys-186. An alcohol contacts are provided by Thr-56 and His-77. Thr-56 contributes to the NAD(+) binding site. Residues 211-216, Asp-235, Lys-240, 305-307, Phe-332, and Arg-382 contribute to the NAD(+) site; these read GLGAVG and LGI.

This sequence belongs to the zinc-containing alcohol dehydrogenase family. Class-III subfamily. In terms of assembly, homodimer. It depends on Zn(2+) as a cofactor.

It is found in the cytoplasm. The enzyme catalyses a primary alcohol + NAD(+) = an aldehyde + NADH + H(+). It catalyses the reaction a secondary alcohol + NAD(+) = a ketone + NADH + H(+). This chain is Alcohol dehydrogenase-like 5, found in Arabidopsis thaliana (Mouse-ear cress).